A 519-amino-acid polypeptide reads, in one-letter code: ATP synthase subunit alpha (519 aa).

174–181 contributes to the ATP binding site; that stretch reads GDRQTGKT.

Belongs to the ATPase alpha/beta chains family. F-type ATPases have 2 components, CF(1) - the catalytic core - and CF(0) - the membrane proton channel. CF(1) has five subunits: alpha(3), beta(3), gamma(1), delta(1), epsilon(1). CF(0) has three main subunits: a(1), b(2) and c(9-12). The alpha and beta chains form an alternating ring which encloses part of the gamma chain. CF(1) is attached to CF(0) by a central stalk formed by the gamma and epsilon chains, while a peripheral stalk is formed by the delta and b chains.

The protein localises to the cell inner membrane. The catalysed reaction is ATP + H2O + 4 H(+)(in) = ADP + phosphate + 5 H(+)(out). Functionally, produces ATP from ADP in the presence of a proton gradient across the membrane. The alpha chain is a regulatory subunit. The polypeptide is ATP synthase subunit alpha (Paracidovorax citrulli (strain AAC00-1) (Acidovorax citrulli)).